The chain runs to 440 residues: Putative purine permease YwdJ (440 aa).

The next 13 helical transmembrane spans lie at 3–23 (LVLG…VVPV), 39–59 (LIQS…LKGH), 67–87 (PAGL…TVFA), 96–116 (LQGA…FKVI), 130–150 (VYLL…ILGI), 156–176 (GVDG…FIMT), 188–208 (ILLA…AKPI), 231–251 (GLII…LASM), 283–303 (LLSG…AGFI), 314–334 (FMLG…MNTF), 341–361 (VGFA…FAEF), 374–394 (SIIG…ETAL), and 399–419 (PVFI…AIAA).

This sequence belongs to the nucleobase:cation symporter-2 (NCS2) (TC 2.A.40) family.

It is found in the cell membrane. The chain is Putative purine permease YwdJ (ywdJ) from Bacillus subtilis (strain 168).